A 141-amino-acid chain; its full sequence is Nucleoside diphosphate kinase (141 aa).

Residues lysine 11, phenylalanine 59, arginine 87, threonine 93, arginine 104, and asparagine 114 each contribute to the ATP site. Histidine 117 acts as the Pros-phosphohistidine intermediate in catalysis.

This sequence belongs to the NDK family. Homotetramer. Requires Mg(2+) as cofactor.

It localises to the cytoplasm. It carries out the reaction a 2'-deoxyribonucleoside 5'-diphosphate + ATP = a 2'-deoxyribonucleoside 5'-triphosphate + ADP. The enzyme catalyses a ribonucleoside 5'-diphosphate + ATP = a ribonucleoside 5'-triphosphate + ADP. Its function is as follows. Major role in the synthesis of nucleoside triphosphates other than ATP. The ATP gamma phosphate is transferred to the NDP beta phosphate via a ping-pong mechanism, using a phosphorylated active-site intermediate. This is Nucleoside diphosphate kinase from Hamiltonella defensa subsp. Acyrthosiphon pisum (strain 5AT).